Reading from the N-terminus, the 294-residue chain is Putative glucose-6-phosphate 1-epimerase (294 aa).

Positions 74 and 99 each coordinate substrate. H164 is a catalytic residue. D208 lines the substrate pocket. E267 is an active-site residue.

This sequence belongs to the glucose-6-phosphate 1-epimerase family. In terms of assembly, monomer in solution.

The catalysed reaction is alpha-D-glucose 6-phosphate = beta-D-glucose 6-phosphate. This is Putative glucose-6-phosphate 1-epimerase (yeaD) from Escherichia coli (strain K12).